A 92-amino-acid polypeptide reads, in one-letter code: Small ribosomal subunit protein uS19 (92 aa).

It belongs to the universal ribosomal protein uS19 family.

In terms of biological role, protein S19 forms a complex with S13 that binds strongly to the 16S ribosomal RNA. This Rhizobium johnstonii (strain DSM 114642 / LMG 32736 / 3841) (Rhizobium leguminosarum bv. viciae) protein is Small ribosomal subunit protein uS19.